The chain runs to 290 residues: Tegument protein VP22 (290 aa).

The span at 98–112 (STSHGRLSPTKTTPH) shows a compositional bias: polar residues. The disordered stretch occupies residues 98 to 156 (STSHGRLSPTKTTPHPKSAGVTPPQRVPARPATRAAAPSATPTQPDCVAKQRTSPGVNS). Positions 118–142 (VTPPQRVPARPATRAAAPSATPTQP) are enriched in low complexity. A Nuclear localization signal motif is present at residues 146–149 (AKQR). Residues 219–231 (LDRFLKAAAIRIL) carry the Nuclear export signal motif.

It belongs to the alphaherpesvirinae VP22 tegument protein family. As to quaternary structure, interacts with gE (via C-terminus); this interaction is necessary for the recruitment of VP22 to the Golgi and its packaging into virions. Interacts with gM (via C-terminus). Interacts with VP16; this interaction allows the formation of a tripartite complex composed of VP16, VP22 and UL41/VHS. Interacts with the capsid-binding protein UL16. Interacts with host CGAS. In terms of processing, highly phosphorylated in the host cell. Packaging is selective for underphosphorylated forms.

Its subcellular location is the virion tegument. It localises to the host cytoplasm. It is found in the host nucleus. The protein resides in the host Golgi apparatus. Its function is as follows. Tegument protein that plays different roles during the time course of infection. Participates in both the accumulation of viral mRNAs and viral protein translation at late time of infection. Modulates the RNase activity of the virion host shutoff protein UL41 probably to ensure necessary levels of key cellular mRNAs and proteins. Plays a role in microtubule reorganization that occurs after viral infection by stabilizing microtubule network. Plays a role in the inhibition of host innate immune system by targeting the CGAS enzymatic activity which is the principal cytosolic DNA sensor that detects invading viral DNA. Acts by mediating disruption of liquid-like droplets in which CGAS is activated, thereby preventing CGAS activity. In Equus caballus (Horse), this protein is Tegument protein VP22 (11).